The following is a 520-amino-acid chain: Putative cytochrome P450 CYP13A5 (520 aa).

Position 464 (Cys-464) interacts with heme.

This sequence belongs to the cytochrome P450 family. Requires heme as cofactor.

Its function is as follows. Cytochromes P450 are a group of heme-thiolate monooxygenases. They oxidize a variety of structurally unrelated compounds, including steroids, fatty acids, and xenobiotics. This Caenorhabditis elegans protein is Putative cytochrome P450 CYP13A5 (cyp-13A5).